The primary structure comprises 457 residues: Acetylcholine receptor subunit alpha (457 aa).

A signal peptide spans 1–20; the sequence is MEPWPLLLLFSLCSAGLVLG. At 21 to 232 the chain is on the extracellular side; the sequence is SEHETRLVAK…YHFVMQRLPL (212 aa). Disulfide bonds link Cys148-Cys162 and Cys212-Cys213. A glycan (N-linked (GlcNAc...) asparagine) is linked at Asn161. A helical membrane pass occupies residues 233 to 253; that stretch reads YFIVNVIIPCLLFSFLTGLVF. Residues 254-264 lie on the Cytoplasmic side of the membrane; it reads YLPTDSGEKMT. Residues 265-285 traverse the membrane as a helical segment; it reads LSISVLLSLTVFLLVIVELIP. The Extracellular segment spans residues 286–296; it reads STSSAVPLIGK. The helical transmembrane segment at 297–317 threads the bilayer; it reads YMLFTMVFVIASIIITVIVIN. At 318–427 the chain is on the cytoplasmic side; it reads THHRSPSTHV…EWKYVAMVMD (110 aa). The helical transmembrane segment at 428-448 threads the bilayer; sequence HILLGVFMLVCIIGTLAVFAG. The Extracellular segment spans residues 449 to 457; sequence RLIELNQQG.

It belongs to the ligand-gated ion channel (TC 1.A.9) family. Acetylcholine receptor (TC 1.A.9.1) subfamily. Alpha-1/CHRNA1 sub-subfamily. One of the alpha chains that assemble within the acetylcholine receptor, a pentamer of two alpha chains, a beta, a delta, and a gamma (in immature muscle) or epsilon (in mature muscle) chains. The muscle heteropentamer composed of alpha-1, beta-1, delta, epsilon subunits interacts with the alpha-conotoxin ImII. In terms of assembly, is able to interact with other subunits of the acetylcholine receptor but is not assembled into functional acetylcholine-gated cation-selective channels. In terms of tissue distribution, isoform 1 is only expressed in skeletal muscle. Isoform 2 is constitutively expressed in skeletal muscle, brain, heart, kidney, liver, lung and thymus.

The protein localises to the postsynaptic cell membrane. It localises to the cell membrane. The enzyme catalyses K(+)(in) = K(+)(out). The catalysed reaction is Na(+)(in) = Na(+)(out). In terms of biological role, upon acetylcholine binding, the AChR responds by an extensive change in conformation that affects all subunits and leads to opening of an ion-conducting channel across the plasma membrane. Non functional acetylcholine receptor alpha subunit which is not integrated into functional acetylcholine-gated cation-selective channels. The sequence is that of Acetylcholine receptor subunit alpha from Homo sapiens (Human).